We begin with the raw amino-acid sequence, 983 residues long: MDRRRLPLLLLCAALGSAGRLSARPGNEVNLLDSKTIQGELGWISYPSHGWEEISGVDEHYTPIRTYQESNVMDHSQNNWLRTNWIPRNSAQKIYVELKFTLRDCNSIPLVLGTCKETFNLYYMESDDDHLAKFREHQFTKIDTIAADESFTQMDLGDRILKLNTEVREVGPVSKKGFYLAFQDVGACVALVSVRVYFKKCPFTVKNLAMFPDTVPMDSQSLVEVRGSCVNHSKEEEPPKMYCSTEGEWLVPIGKCLCNAGYEERGFACQACRPGFYKASAGNVKCAKCPPHSSTYEDASLNCRCEKNYFRSEKDPPSMACTRPPSAPRNVISNINETSVILDWSWPLDTGGRKDVTFNIICKKCGGSSKICEPCSDNVRFLPRQTGLTNTTVTVVDLLAHTNYTFEIDAVNGVSDLSTLSRQFAAVSITTNQAAPSPITVIRKDRTSRNSVSLSWQEPEHPNGIILDYEVKYYEKQEQETSYTILRAKSTNVTISGLKPDTTYVFQIRARTAARYGTSSRKFEFETSPDSFSISSENSQVVMIAISAAVAIILLTVVVYVLIGRFCGYKKSKHGTDEKRLHFGNGHLKLPGLRTYVDPHTYEDPNQAVHEFAKELDASNISIDKVVGAGEFGEVCSGRLKLPSKKEISVAIKTLKAGYTEKQRRDFLGEASIMGQFDHPNIIRLEGVVTKSKPVMIVTEYMENGSLDSFLRKHDAQFTVIQLVGMLRGIASGMKYLSDMGYVHRDLAARNILINSNLVCKVSDFGLSRVLEDDPEAAYTTRGGKIPIRWTSPEAIAYRKFTSASDAWSYGIVLWEVMSYGERPYWEMSFQDVIKAVDEGYRLPPPMDCPAALYQLMLDCWQKDRNNRPKFEQIVSILDKLIRNPSSLKIITNAAARPSNLLLDQSNIDISAFRTAGDWLNGFRTGQCKGIFTGVEYSSCDTIAKISTDDMKKVGVTVVGPQKKIVSSIKTLETHTKNSPVPV.

A signal peptide spans 1–19; that stretch reads MDRRRLPLLLLCAALGSAG. The Extracellular segment spans residues 20–540; that stretch reads RLSARPGNEV…SFSISSENSQ (521 aa). Residues 28-206 form the Eph LBD domain; it reads EVNLLDSKTI…YFKKCPFTVK (179 aa). Residues Asn-231, Asn-336, Asn-390, Asn-403, and Asn-492 are each glycosylated (N-linked (GlcNAc...) asparagine). 2 consecutive Fibronectin type-III domains span residues 324-434 and 435-530; these read PPSA…TNQA and APSP…TSPD. A helical transmembrane segment spans residues 541–564; the sequence is VVMIAISAAVAIILLTVVVYVLIG. Residues 565–983 lie on the Cytoplasmic side of the membrane; it reads RFCGYKKSKH…THTKNSPVPV (419 aa). Phosphotyrosine; by autocatalysis is present on residues Tyr-596 and Tyr-602. Residues 621 to 882 form the Protein kinase domain; it reads ISIDKVVGAG…QIVSILDKLI (262 aa). Residues 628–633, Lys-653, and 700–706 contribute to the ATP site; these read GAGEFG and EYMENGS. Tyr-701 carries the phosphotyrosine; by autocatalysis modification. The Proton acceptor role is filled by Asp-746. 750 to 751 is a binding site for ATP; the sequence is RN. Tyr-779 is modified (phosphotyrosine; by autocatalysis). The SAM domain occupies 911-975; that stretch reads SAFRTAGDWL…VSSIKTLETH (65 aa). The PDZ-binding signature appears at 981 to 983; that stretch reads VPV.

This sequence belongs to the protein kinase superfamily. Tyr protein kinase family. Ephrin receptor subfamily. Heterotetramer upon binding of the ligand. The heterotetramer is composed of an ephrin dimer and a receptor dimer. Oligomerization is probably required to induce biological responses. Post-translationally, autophosphorylates upon activation by EFNA5. As to expression, highly expressed in the developing brain and embryonic tissues. In adult, the greatest levels of expression occur in the brain. It is expressed in a graded manner across the retina with the highest expression at its temporal pole. Detectable in all other adult tissues examined, except the liver.

Its subcellular location is the cell membrane. The enzyme catalyses L-tyrosyl-[protein] + ATP = O-phospho-L-tyrosyl-[protein] + ADP + H(+). Its function is as follows. Receptor tyrosine kinase which binds promiscuously membrane-bound ephrin family ligands residing on adjacent cells, leading to contact-dependent bidirectional signaling into neighboring cells. The signaling pathway downstream of the receptor is referred to as forward signaling while the signaling pathway downstream of the ephrin ligand is referred to as reverse signaling. Highly promiscuous for ephrin-A ligands it binds preferentially EFNA5. Upon activation by EFNA5 regulates cell-cell adhesion, cytoskeletal organization and cell migration. Plays a role in cardiac cells migration and differentiation probably through activation by EFNA1. Involved in the retinotectal mapping of neurons. May also control the segregation but not the guidance of motor and sensory axons during neuromuscular circuit development. This chain is Ephrin type-A receptor 3 (EPHA3), found in Gallus gallus (Chicken).